We begin with the raw amino-acid sequence, 306 residues long: Glutaminase (306 aa).

Residues Ser64, Asn115, Glu159, Asn166, Tyr190, Tyr242, and Val260 each coordinate substrate.

It belongs to the glutaminase family. In terms of assembly, homotetramer.

The enzyme catalyses L-glutamine + H2O = L-glutamate + NH4(+). The polypeptide is Glutaminase (Vibrio cholerae serotype O1 (strain ATCC 39315 / El Tor Inaba N16961)).